Reading from the N-terminus, the 701-residue chain is Centrosomal protein of 83 kDa (701 aa).

Positions 1–14 (MVVSTFTDMDTFPN) are enriched in polar residues. Residues 1–23 (MVVSTFTDMDTFPNNFPPGGDSG) are disordered. Coiled-coil stretches lie at residues 40 to 634 (LRCE…SLIL) and 665 to 698 (HMQEEQHQRELSLLRKRLEELETTQRKQLEELGS). Phosphoserine is present on serine 698.

It belongs to the CEP83 family. Interacts with CEP164 and IFT20.

It is found in the cytoplasm. The protein resides in the cytoskeleton. It localises to the microtubule organizing center. Its subcellular location is the centrosome. The protein localises to the centriole. Component of the distal appendage region of the centriole involved in the initiation of primary cilium assembly. May collaborate with IFT20 in the trafficking of ciliary membrane proteins from the Golgi complex to the cilium during the initiation of primary cilium assembly. The polypeptide is Centrosomal protein of 83 kDa (CEP83) (Homo sapiens (Human)).